A 225-amino-acid chain; its full sequence is Large ribosomal subunit protein eL15 (225 aa).

The tract at residues 159-180 (RPFRGLTSAGKKMRGLRKSRGL) is disordered. A compositionally biased stretch (basic residues) spans 169 to 180 (KKMRGLRKSRGL).

This sequence belongs to the eukaryotic ribosomal protein eL15 family.

The protein is Large ribosomal subunit protein eL15 (rpl15e) of Aeropyrum pernix (strain ATCC 700893 / DSM 11879 / JCM 9820 / NBRC 100138 / K1).